The sequence spans 439 residues: UDP-N-acetylmuramoylalanine--D-glutamate ligase (439 aa).

Position 112 to 118 (112 to 118) interacts with ATP; it reads GSNGKST.

Belongs to the MurCDEF family.

It localises to the cytoplasm. It catalyses the reaction UDP-N-acetyl-alpha-D-muramoyl-L-alanine + D-glutamate + ATP = UDP-N-acetyl-alpha-D-muramoyl-L-alanyl-D-glutamate + ADP + phosphate + H(+). It functions in the pathway cell wall biogenesis; peptidoglycan biosynthesis. Functionally, cell wall formation. Catalyzes the addition of glutamate to the nucleotide precursor UDP-N-acetylmuramoyl-L-alanine (UMA). This Mannheimia succiniciproducens (strain KCTC 0769BP / MBEL55E) protein is UDP-N-acetylmuramoylalanine--D-glutamate ligase.